Reading from the N-terminus, the 239-residue chain is Ribonuclease PH (239 aa).

Phosphate contacts are provided by residues R87 and 125 to 127; that span reads GTR.

It belongs to the RNase PH family. As to quaternary structure, homohexameric ring arranged as a trimer of dimers.

It catalyses the reaction tRNA(n+1) + phosphate = tRNA(n) + a ribonucleoside 5'-diphosphate. Functionally, phosphorolytic 3'-5' exoribonuclease that plays an important role in tRNA 3'-end maturation. Removes nucleotide residues following the 3'-CCA terminus of tRNAs; can also add nucleotides to the ends of RNA molecules by using nucleoside diphosphates as substrates, but this may not be physiologically important. Probably plays a role in initiation of 16S rRNA degradation (leading to ribosome degradation) during starvation. This Dehalococcoides mccartyi (strain ATCC BAA-2266 / KCTC 15142 / 195) (Dehalococcoides ethenogenes (strain 195)) protein is Ribonuclease PH.